We begin with the raw amino-acid sequence, 101 residues long: Putative pterin-4-alpha-carbinolamine dehydratase (101 aa).

It belongs to the pterin-4-alpha-carbinolamine dehydratase family.

It carries out the reaction (4aS,6R)-4a-hydroxy-L-erythro-5,6,7,8-tetrahydrobiopterin = (6R)-L-erythro-6,7-dihydrobiopterin + H2O. The sequence is that of Putative pterin-4-alpha-carbinolamine dehydratase from Rhizobium leguminosarum bv. trifolii (strain WSM2304).